Here is a 214-residue protein sequence, read N- to C-terminus: Homeobox protein HEX homolog pha-2 (214 aa).

2 disordered regions span residues 1 to 50 (MDQK…QKME) and 180 to 214 (RRVRKDGEDEDEMPNGASARSLGQLQSSNPFLSHG). Low complexity predominate over residues 24–34 (SSESPIPTGSE). Residues 35–44 (CSLNESSDTT) are compositionally biased toward polar residues. A DNA-binding region (homeobox) is located at residues 124 to 183 (RKGGQIRFTNEQTDALEHKFDSHKYLSPQERKKLAKSLSLSERQVKTWFQNRRAKWRRVR). Over residues 200 to 214 (SLGQLQSSNPFLSHG) the composition is skewed to polar residues.

Its subcellular location is the nucleus. Functionally, transcriptional repressor. Involved in pharyngeal development and required for the formation of the pharyngeal isthmus. Plays a role in modulating cytoskeleton in the muscle cells of the isthmus. Regulates expression of the acetylcholinesterase genes ace-1 and ace-2. May regulate its own expression. This Caenorhabditis elegans protein is Homeobox protein HEX homolog pha-2.